Reading from the N-terminus, the 369-residue chain is Anhydro-N-acetylmuramic acid kinase (369 aa).

12 to 19 (GTSLDGVD) is a binding site for ATP.

It belongs to the anhydro-N-acetylmuramic acid kinase family.

It carries out the reaction 1,6-anhydro-N-acetyl-beta-muramate + ATP + H2O = N-acetyl-D-muramate 6-phosphate + ADP + H(+). Its pathway is amino-sugar metabolism; 1,6-anhydro-N-acetylmuramate degradation. It functions in the pathway cell wall biogenesis; peptidoglycan recycling. Functionally, catalyzes the specific phosphorylation of 1,6-anhydro-N-acetylmuramic acid (anhMurNAc) with the simultaneous cleavage of the 1,6-anhydro ring, generating MurNAc-6-P. Is required for the utilization of anhMurNAc either imported from the medium or derived from its own cell wall murein, and thus plays a role in cell wall recycling. The sequence is that of Anhydro-N-acetylmuramic acid kinase from Shigella boydii serotype 4 (strain Sb227).